A 272-amino-acid polypeptide reads, in one-letter code: METYAVFGNPIAHSKSPFIHQQFAQQLNIEHPYGRVLAPINDFINTLNAFFSAGGKGANVTVPFKEEAFARADELTERAALAGAVNTLKRLEDGRLQGDNTDGIGLLSDLERLSFIRPGLRILLIGAGGASRGVLLPLLSLDCAVTITNRTVSRAEELAKLFAHTGSIQALGMDELEGHEFDLIINATSSGISGDIPAIPSSLIHLGIYCYDMFYQKGKTPFLAWCEQRGSKRNVDGLGMLVAQAAHAFLLWHGVLPDVEPVIKQLQEELSA.

Shikimate contacts are provided by residues 14–16 (SKS) and threonine 61. Lysine 65 acts as the Proton acceptor in catalysis. Position 77 (glutamate 77) interacts with NADP(+). Positions 86 and 102 each coordinate shikimate. Residues 126–130 (GAGGA), 149–154 (NRTVSR), and methionine 213 contribute to the NADP(+) site. Tyrosine 215 lines the shikimate pocket. Glycine 237 provides a ligand contact to NADP(+).

It belongs to the shikimate dehydrogenase family. As to quaternary structure, homodimer.

It catalyses the reaction shikimate + NADP(+) = 3-dehydroshikimate + NADPH + H(+). It functions in the pathway metabolic intermediate biosynthesis; chorismate biosynthesis; chorismate from D-erythrose 4-phosphate and phosphoenolpyruvate: step 4/7. Involved in the biosynthesis of the chorismate, which leads to the biosynthesis of aromatic amino acids. Catalyzes the reversible NADPH linked reduction of 3-dehydroshikimate (DHSA) to yield shikimate (SA). This chain is Shikimate dehydrogenase (NADP(+)), found in Shigella boydii serotype 18 (strain CDC 3083-94 / BS512).